A 569-amino-acid polypeptide reads, in one-letter code: Protein misato homolog 1 (569 aa).

2 positions are modified to phosphoserine: Ser41 and Ser495.

It belongs to the misato family.

Its subcellular location is the mitochondrion outer membrane. The protein resides in the cytoplasm. Functionally, involved in the regulation of mitochondrial distribution and morphology. Required for mitochondrial fusion and mitochondrial network formation. The chain is Protein misato homolog 1 (MSTO1) from Macaca fascicularis (Crab-eating macaque).